We begin with the raw amino-acid sequence, 147 residues long: Protein SprT-like (147 aa).

Residues 5 to 142 (DYVNEVSLED…SFCRGHLKEI (138 aa)) enclose the SprT-like domain. His64 contributes to the Zn(2+) binding site. Glu65 is a catalytic residue. Residue His68 coordinates Zn(2+).

The protein belongs to the SprT family. Zn(2+) serves as cofactor.

The protein resides in the cytoplasm. This chain is Protein SprT-like, found in Streptococcus uberis (strain ATCC BAA-854 / 0140J).